Here is a 304-residue protein sequence, read N- to C-terminus: Homoserine O-acetyltransferase (304 aa).

Catalysis depends on Cys-142, which acts as the Acyl-thioester intermediate. Lys-163 and Ser-191 together coordinate substrate. His-234 acts as the Proton acceptor in catalysis. Residue Glu-236 is part of the active site. Residue Arg-248 coordinates substrate.

This sequence belongs to the MetA family.

The protein localises to the cytoplasm. It catalyses the reaction L-homoserine + acetyl-CoA = O-acetyl-L-homoserine + CoA. Its pathway is amino-acid biosynthesis; L-methionine biosynthesis via de novo pathway; O-acetyl-L-homoserine from L-homoserine: step 1/1. Functionally, transfers an acetyl group from acetyl-CoA to L-homoserine, forming acetyl-L-homoserine. The protein is Homoserine O-acetyltransferase of Thermotoga petrophila (strain ATCC BAA-488 / DSM 13995 / JCM 10881 / RKU-1).